The following is a 95-amino-acid chain: uncharacterized protein (95 aa).

An N-terminal signal peptide occupies residues Met1 to His22. Topologically, residues Leu23–Thr52 are extracellular. A helical membrane pass occupies residues Ile53 to His69. Over Pro70–Cys95 the chain is Cytoplasmic.

It is found in the host membrane. This is an uncharacterized protein from Acidianus bottle-shaped virus (isolate Italy/Pozzuoli) (ABV).